The primary structure comprises 837 residues: Tuftelin-interacting protein 11 (837 aa).

Basic and acidic residues-rich tracts occupy residues 1-13 and 53-64; these read MSLSHLYRDGEGR and VWAERDSDDERP. 3 disordered regions span residues 1 to 21, 53 to 72, and 85 to 133; these read MSLSHLYRDGEGRIDDDDDER, VWAERDSDDERPSFGGKRAR, and LKKG…KGFA. Residues 1–50 are required for interaction with DHX15; it reads MSLSHLYRDGEGRIDDDDDERENFEITDWDLQNEFNPNRQRHWQTKEEAT. A phosphoserine mark is found at Ser2, Ser59, and Ser98. Positions 91 to 102 are enriched in acidic residues; the sequence is EEAELEDSDDEE. Over residues 103 to 116 the composition is skewed to basic and acidic residues; it reads KPVKQDDFPKDFGP. At Ser144 the chain carries Phosphoserine. In terms of domain architecture, G-patch spans 149–195; the sequence is TKGIGQKLLQKMGYVPGRGLGKNAQGIINPIEAKQRKGKGAVGAYGS. The segment at 179-236 is disordered; that stretch reads IEAKQRKGKGAVGAYGSERTTQSMQDFPVVDSEEEAEEEFQKELSQWRKDPSGSKKKP. Position 210 is a phosphoserine (Ser210). A compositionally biased stretch (basic and acidic residues) spans 217 to 231; that stretch reads EFQKELSQWRKDPSG. The short motif at 700-705 is the Nuclear localization signal element; sequence VKDKFN. The interval 710-734 is required for nuclear speckle localization; it reads IMNRAVSSNVGAYMQPGARENIAYL.

It belongs to the TFP11/STIP family. In terms of assembly, identified in the spliceosome C complex. Found in the Intron Large (IL) complex, a post-mRNA release spliceosomal complex containing the excised intron, U2, U5 and U6 snRNPs, and splicing factors. Interacts with TUFT1. Interacts with DHX15; indicative for a recruitment of DHX15 to the IL complex. Interacts with GCFC2.

The protein resides in the cytoplasm. It is found in the nucleus. Its function is as follows. Involved in pre-mRNA splicing, specifically in spliceosome disassembly during late-stage splicing events. Intron turnover seems to proceed through reactions in two lariat-intron associated complexes termed Intron Large (IL) and Intron Small (IS). In cooperation with DHX15 seems to mediate the transition of the U2, U5 and U6 snRNP-containing IL complex to the snRNP-free IS complex leading to efficient debranching and turnover of excised introns. May play a role in the differentiation of ameloblasts and odontoblasts or in the forming of the enamel extracellular matrix. In Pongo abelii (Sumatran orangutan), this protein is Tuftelin-interacting protein 11 (TFIP11).